Consider the following 177-residue polypeptide: Inner membrane-spanning protein YciB (177 aa).

5 helical membrane-spanning segments follow: residues 22–42 (IFIASGSLIVISGLICIIHWI), 50–70 (ISLFSFLSVFFFGSLTIFFHN), 76–96 (WKITIIYIIFSLVLLISQFFT), 121–141 (FIWSLFFLFCAILNIYIAYYF), and 149–169 (FKVFGFTSLTFFLILITSIYI).

Belongs to the YciB family.

It localises to the cell inner membrane. Plays a role in cell envelope biogenesis, maintenance of cell envelope integrity and membrane homeostasis. In Buchnera aphidicola subsp. Acyrthosiphon pisum (strain APS) (Acyrthosiphon pisum symbiotic bacterium), this protein is Inner membrane-spanning protein YciB.